Here is a 294-residue protein sequence, read N- to C-terminus: Phosphatidylglycerol--prolipoprotein diacylglyceryl transferase (294 aa).

7 consecutive transmembrane segments (helical) span residues valine 19–leucine 39, leucine 69–tyrosine 89, isoleucine 101–alanine 121, isoleucine 139–alanine 159, glutamine 195–tryptophan 215, glycine 224–phenylalanine 244, and tryptophan 267–isoleucine 287. An a 1,2-diacyl-sn-glycero-3-phospho-(1'-sn-glycerol)-binding site is contributed by arginine 152.

The protein belongs to the Lgt family.

It localises to the cell inner membrane. It catalyses the reaction L-cysteinyl-[prolipoprotein] + a 1,2-diacyl-sn-glycero-3-phospho-(1'-sn-glycerol) = an S-1,2-diacyl-sn-glyceryl-L-cysteinyl-[prolipoprotein] + sn-glycerol 1-phosphate + H(+). Its pathway is protein modification; lipoprotein biosynthesis (diacylglyceryl transfer). In terms of biological role, catalyzes the transfer of the diacylglyceryl group from phosphatidylglycerol to the sulfhydryl group of the N-terminal cysteine of a prolipoprotein, the first step in the formation of mature lipoproteins. This Roseobacter denitrificans (strain ATCC 33942 / OCh 114) (Erythrobacter sp. (strain OCh 114)) protein is Phosphatidylglycerol--prolipoprotein diacylglyceryl transferase.